Here is a 188-residue protein sequence, read N- to C-terminus: HGPRTase-like protein (188 aa).

This sequence belongs to the purine/pyrimidine phosphoribosyltransferase family. Archaeal HPRT subfamily.

In terms of biological role, may catalyze a purine salvage reaction, the substrate is unknown. The protein is HGPRTase-like protein of Halobacterium salinarum (strain ATCC 29341 / DSM 671 / R1).